The primary structure comprises 152 residues: Transcriptional regulator MraZ (152 aa).

SpoVT-AbrB domains follow at residues 5–52 (ATMV…PLPE) and 81–124 (ASEC…DEQT).

This sequence belongs to the MraZ family. As to quaternary structure, forms oligomers.

Its subcellular location is the cytoplasm. It localises to the nucleoid. In terms of biological role, negatively regulates its own expression and that of the subsequent genes in the proximal part of the division and cell wall (dcw) gene cluster. Acts by binding directly to DNA. May also regulate the expression of genes outside the dcw cluster. The protein is Transcriptional regulator MraZ of Serratia proteamaculans (strain 568).